Consider the following 282-residue polypeptide: NADPH-dependent 7-cyano-7-deazaguanine reductase (282 aa).

Ile88–Ser90 contributes to the substrate binding site. Residue Ser90–Lys91 participates in NADPH binding. Cys190 (thioimide intermediate) is an active-site residue. The active-site Proton donor is the Asp197. Substrate is bound at residue His229 to Glu230. An NADPH-binding site is contributed by Arg258–Gly259.

Belongs to the GTP cyclohydrolase I family. QueF type 2 subfamily. As to quaternary structure, homodimer.

Its subcellular location is the cytoplasm. The enzyme catalyses 7-aminomethyl-7-carbaguanine + 2 NADP(+) = 7-cyano-7-deazaguanine + 2 NADPH + 3 H(+). It functions in the pathway tRNA modification; tRNA-queuosine biosynthesis. Catalyzes the NADPH-dependent reduction of 7-cyano-7-deazaguanine (preQ0) to 7-aminomethyl-7-deazaguanine (preQ1). The chain is NADPH-dependent 7-cyano-7-deazaguanine reductase from Escherichia coli O157:H7.